The primary structure comprises 349 residues: Ion-translocating oxidoreductase complex subunit D (349 aa).

A run of 3 helical transmembrane segments spans residues 36-56, 77-99, and 124-144; these read CAFFGWGTLIQVLLAIIVALS, SAMLTAILIGVAIPPLAPWWMIV, and AMAAYVLLLVSFPLQMTTWIA. The residue at position 185 (Thr-185) is an FMN phosphoryl threonine. 5 helical membrane-spanning segments follow: residues 212-232, 239-259, 265-285, 291-311, and 315-335; these read STGVGWFWVNLAYLAGGIVLL, WHISTGVLAGLFVASSVGFLL, ASPLFHLFSGATMLAAFFIAT, ATSPRGRIIFGALIGVLVYII, and GGYPDAFAFAVLLANLCAPFI.

It belongs to the NqrB/RnfD family. The complex is composed of six subunits: RnfA, RnfB, RnfC, RnfD, RnfE and RnfG. FMN serves as cofactor.

The protein resides in the cell inner membrane. Its function is as follows. Part of a membrane-bound complex that couples electron transfer with translocation of ions across the membrane. In Shewanella oneidensis (strain ATCC 700550 / JCM 31522 / CIP 106686 / LMG 19005 / NCIMB 14063 / MR-1), this protein is Ion-translocating oxidoreductase complex subunit D.